The sequence spans 367 residues: tRNA 2-selenouridine synthase (367 aa).

The region spanning 12–136 (FLNDRPLMDA…LRGFLIDTLE (125 aa)) is the Rhodanese domain. Cys-95 acts as the S-selanylcysteine intermediate in catalysis.

The protein belongs to the SelU family. In terms of assembly, monomer.

The catalysed reaction is 5-methylaminomethyl-2-thiouridine(34) in tRNA + selenophosphate + (2E)-geranyl diphosphate + H2O + H(+) = 5-methylaminomethyl-2-selenouridine(34) in tRNA + (2E)-thiogeraniol + phosphate + diphosphate. It carries out the reaction 5-methylaminomethyl-2-thiouridine(34) in tRNA + (2E)-geranyl diphosphate = 5-methylaminomethyl-S-(2E)-geranyl-thiouridine(34) in tRNA + diphosphate. The enzyme catalyses 5-methylaminomethyl-S-(2E)-geranyl-thiouridine(34) in tRNA + selenophosphate + H(+) = 5-methylaminomethyl-2-(Se-phospho)selenouridine(34) in tRNA + (2E)-thiogeraniol. It catalyses the reaction 5-methylaminomethyl-2-(Se-phospho)selenouridine(34) in tRNA + H2O = 5-methylaminomethyl-2-selenouridine(34) in tRNA + phosphate. Its function is as follows. Involved in the post-transcriptional modification of the uridine at the wobble position (U34) of tRNA(Lys), tRNA(Glu) and tRNA(Gln). Catalyzes the conversion of 2-thiouridine (S2U-RNA) to 2-selenouridine (Se2U-RNA). Acts in a two-step process involving geranylation of 2-thiouridine (S2U) to S-geranyl-2-thiouridine (geS2U) and subsequent selenation of the latter derivative to 2-selenouridine (Se2U) in the tRNA chain. This is tRNA 2-selenouridine synthase from Pseudomonas fluorescens (strain Pf0-1).